The sequence spans 393 residues: Probable acetyl-CoA acetyltransferase (393 aa).

A propeptide (removed; alternate) is located at residue T2. The Acyl-thioester intermediate role is filled by C88. Active-site proton acceptor residues include H349 and C379.

It belongs to the thiolase-like superfamily. Thiolase family.

The catalysed reaction is 2 acetyl-CoA = acetoacetyl-CoA + CoA. The polypeptide is Probable acetyl-CoA acetyltransferase (fadA4) (Mycobacterium tuberculosis (strain ATCC 25618 / H37Rv)).